Here is a 305-residue protein sequence, read N- to C-terminus: Olfactory receptor 4F17 (305 aa).

At 1-18 the chain is on the extracellular side; sequence MVTEFIFLGLSDSQGLQT. A helical transmembrane segment spans residues 19–42; the sequence is FLFMLFFVFYGGIVFGNLLIVITV. The Cytoplasmic segment spans residues 43-50; it reads VSDSHLHS. Residues 51–72 traverse the membrane as a helical segment; it reads PMYFLLANLSLIDLSLSSVTAP. The Extracellular portion of the chain corresponds to 73–93; sequence KMITDFFSQRKVISFKGCLVQ. Cysteine 90 and cysteine 182 are oxidised to a cystine. A helical membrane pass occupies residues 94-113; that stretch reads IFLLHFFGGSEMVILIAMGF. Residues 114 to 132 lie on the Cytoplasmic side of the membrane; it reads DRYIAICKPLHYTTIMCGN. Residues 133-151 form a helical membrane-spanning segment; that stretch reads ACVGIMAVAWGIGFLHSVS. Topologically, residues 152 to 188 are extracellular; sequence QLAFAVHLPFCGPNEVDSFYCDLPRVIKLACTDTYRL. A helical membrane pass occupies residues 189–212; that stretch reads DIMVIANSGVLTVCSFVLLIISYT. The Cytoplasmic segment spans residues 213-228; sequence IILMTIQHRPLDKSSK. Residues 229–251 traverse the membrane as a helical segment; that stretch reads ALSTLTAHITVVLLFFGPCVFIY. At 252-262 the chain is on the extracellular side; sequence AWPFPIKSLDK. A helical transmembrane segment spans residues 263–282; that stretch reads FLAVFYSVITPLLNPIIYTL. Residues 283 to 305 lie on the Cytoplasmic side of the membrane; that stretch reads RNKDMKTAIRQLRKWDAHSSVKF.

The protein belongs to the G-protein coupled receptor 1 family.

Its subcellular location is the cell membrane. In terms of biological role, odorant receptor. The polypeptide is Olfactory receptor 4F17 (OR4F17) (Homo sapiens (Human)).